Here is a 70-residue protein sequence, read N- to C-terminus: U-scutigerotoxin(02)-Tl1a (70 aa).

The signal sequence occupies residues 1–17; the sequence is MKYILLGLLLMVVLANA.

This sequence belongs to the scutigerotoxin-02 family. Post-translationally, contains 4 disulfide bonds. In terms of tissue distribution, expressed by the venom gland.

It localises to the secreted. The polypeptide is U-scutigerotoxin(02)-Tl1a (Thereuopoda longicornis (Long-legged centipede)).